Reading from the N-terminus, the 112-residue chain is UstYa family oxidase VicYb (112 aa).

Short sequence motifs (HXXHC) lie at residues 9 to 13 (HYLHC) and 36 to 40 (HLDHC).

Belongs to the ustYa family.

It participates in mycotoxin biosynthesis. Its function is as follows. UstYa family oxidase, part of the gene cluster that mediates the biosynthesis of the secondary metabolite victorin, the molecular basis for Victoria blight of oats. Within the pathway, vicYb catalyzes the oxidative cyclization of the core peptide. The pathway starts with the processing of the precursor vicA1 by several endopeptidases including kexin proteases as well as the cluster-specific S28 family peptidases vicPa and vicPb to produce 7 identical copies of the hexapeptide Gly-Leu-Lys-Leu-Ala-Phe. After being excised from the precursor peptide, the core peptides are cyclized and modified post-translationally by enzymes encoded within the gene cluster. The ustYa family oxidase vicYb is required for the formation of the macrocycle in victorin and the copper amine oxidases (CAOs) vicK1 and vicK2 are responsible for converting victorin to the active form by oxidizing the N-terminal glycyl residue in the peptides to glyoxylate. Relaxed substrate specificity of enzymes in the victorin biosynthetic pathway results in a metabolic grid that produces a set of analogs including victorinines B, C, E or HV-toxin M. This chain is UstYa family oxidase VicYb, found in Bipolaris victoriae (strain FI3) (Victoria blight of oats agent).